A 197-amino-acid chain; its full sequence is Elongation factor Ts (197 aa).

An involved in Mg(2+) ion dislocation from EF-Tu region spans residues 81–84 (TDFV).

Belongs to the EF-Ts family.

Its subcellular location is the cytoplasm. Functionally, associates with the EF-Tu.GDP complex and induces the exchange of GDP to GTP. It remains bound to the aminoacyl-tRNA.EF-Tu.GTP complex up to the GTP hydrolysis stage on the ribosome. This is Elongation factor Ts from Petrotoga mobilis (strain DSM 10674 / SJ95).